The primary structure comprises 218 residues: Ribose-5-phosphate isomerase A (218 aa).

Substrate contacts are provided by residues Thr-27–Thr-30, Asp-80–Asp-83, and Lys-93–Gly-96. Glu-102 (proton acceptor) is an active-site residue. Lys-120 is a binding site for substrate.

This sequence belongs to the ribose 5-phosphate isomerase family. As to quaternary structure, homodimer.

It carries out the reaction aldehydo-D-ribose 5-phosphate = D-ribulose 5-phosphate. It functions in the pathway carbohydrate degradation; pentose phosphate pathway; D-ribose 5-phosphate from D-ribulose 5-phosphate (non-oxidative stage): step 1/1. In terms of biological role, catalyzes the reversible conversion of ribose-5-phosphate to ribulose 5-phosphate. In Picrophilus torridus (strain ATCC 700027 / DSM 9790 / JCM 10055 / NBRC 100828 / KAW 2/3), this protein is Ribose-5-phosphate isomerase A.